A 142-amino-acid polypeptide reads, in one-letter code: MAKKITGYIKLQVKAAQANPSPPIGPALGQRGLNIMEFCKAFNAQTQGVEPGLPLPVVITVFADKSFTFEVKTPPAAVLLMKAAGLPKGSGRPNTVKVGKVSEAQIEDIAKTKMPDLNTQDIESAKRSVRGTARSMGLTVEG.

This sequence belongs to the universal ribosomal protein uL11 family. As to quaternary structure, part of the ribosomal stalk of the 50S ribosomal subunit. Interacts with L10 and the large rRNA to form the base of the stalk. L10 forms an elongated spine to which L12 dimers bind in a sequential fashion forming a multimeric L10(L12)X complex. Post-translationally, one or more lysine residues are methylated.

Forms part of the ribosomal stalk which helps the ribosome interact with GTP-bound translation factors. The protein is Large ribosomal subunit protein uL11 of Acidithiobacillus ferrooxidans (strain ATCC 23270 / DSM 14882 / CIP 104768 / NCIMB 8455) (Ferrobacillus ferrooxidans (strain ATCC 23270)).